A 165-amino-acid chain; its full sequence is Type 3 secretion system regulator YopR (165 aa).

The segment at 2–11 (TVTLNRGSIT) is 5' secretion signal. The 3' secretion signal stretch occupies residues 131 to 149 (PYLSELINKELMILLPYNS).

This sequence belongs to the YopR family.

It localises to the secreted. Functionally, may be involved in the regulation of the assembly of the type III secretion system (T3SS), also called injectisome, which is used to inject bacterial effector proteins into eukaryotic host cells. May control the secretion and/or polymerization of YscF/SctF, the principal component of the needle filament, thereby impacting the assembly of the T3SS. Involved in pathogenesis. Essential for the establishment of Yersinia infections in a mouse model system. The sequence is that of Type 3 secretion system regulator YopR from Yersinia enterocolitica.